We begin with the raw amino-acid sequence, 123 residues long: UPF0102 protein CLM_2733 (123 aa).

The protein belongs to the UPF0102 family.

The polypeptide is UPF0102 protein CLM_2733 (Clostridium botulinum (strain Kyoto / Type A2)).